We begin with the raw amino-acid sequence, 482 residues long: Anthranilate synthase component 1 (482 aa).

Residues S47 and 267–269 (PYM) contribute to the L-tryptophan site. Residue 302-303 (GT) participates in chorismate binding. Position 329 (E329) interacts with Mg(2+). Residues Y417, R437, 451 to 453 (GGG), and G453 contribute to the chorismate site. A Mg(2+)-binding site is contributed by E466.

Belongs to the anthranilate synthase component I family. In terms of assembly, heterotetramer consisting of two non-identical subunits: a beta subunit (TrpG) and a large alpha subunit (TrpE). Mg(2+) is required as a cofactor.

The enzyme catalyses chorismate + L-glutamine = anthranilate + pyruvate + L-glutamate + H(+). It participates in amino-acid biosynthesis; L-tryptophan biosynthesis; L-tryptophan from chorismate: step 1/5. Feedback inhibited by tryptophan. Functionally, part of a heterotetrameric complex that catalyzes the two-step biosynthesis of anthranilate, an intermediate in the biosynthesis of L-tryptophan. In the first step, the glutamine-binding beta subunit (TrpG) of anthranilate synthase (AS) provides the glutamine amidotransferase activity which generates ammonia as a substrate that, along with chorismate, is used in the second step, catalyzed by the large alpha subunit of AS (TrpE) to produce anthranilate. In the absence of TrpG, TrpE can synthesize anthranilate directly from chorismate and high concentrations of ammonia. This is Anthranilate synthase component 1 (trpE) from Spirochaeta aurantia.